The sequence spans 373 residues: Tryptophan--tRNA ligase (373 aa).

The 'HIGH' region signature appears at 79–87 (PSGKFHFGH). The 'KMSKS' region motif lies at 257–261 (KMSSS).

It belongs to the class-I aminoacyl-tRNA synthetase family.

The protein localises to the cytoplasm. The catalysed reaction is tRNA(Trp) + L-tryptophan + ATP = L-tryptophyl-tRNA(Trp) + AMP + diphosphate + H(+). The chain is Tryptophan--tRNA ligase from Hyperthermus butylicus (strain DSM 5456 / JCM 9403 / PLM1-5).